A 338-amino-acid polypeptide reads, in one-letter code: Ornithine carbamoyltransferase (338 aa).

Carbamoyl phosphate contacts are provided by residues 56–59 (STRT), Q83, R107, and 134–137 (HPTQ). L-ornithine-binding positions include N168, D232, and 236–237 (SM). Carbamoyl phosphate is bound by residues 274–275 (CL) and R320.

The protein belongs to the aspartate/ornithine carbamoyltransferase superfamily. OTCase family.

The protein localises to the cytoplasm. The catalysed reaction is carbamoyl phosphate + L-ornithine = L-citrulline + phosphate + H(+). The protein operates within amino-acid biosynthesis; L-arginine biosynthesis; L-arginine from L-ornithine and carbamoyl phosphate: step 1/3. Functionally, reversibly catalyzes the transfer of the carbamoyl group from carbamoyl phosphate (CP) to the N(epsilon) atom of ornithine (ORN) to produce L-citrulline. The chain is Ornithine carbamoyltransferase from Photorhabdus laumondii subsp. laumondii (strain DSM 15139 / CIP 105565 / TT01) (Photorhabdus luminescens subsp. laumondii).